The following is a 311-amino-acid chain: Olfactory receptor 10J4 (311 aa).

The Extracellular portion of the chain corresponds to 1–29 (MPRPNFMAVTEFTFEGFSIFEWHHRLILF). The chain crosses the membrane as a helical span at residues 30-50 (VIFLVLYVLTLASNAIILIVI). Over 51–57 (RLNHQLH) the chain is Cytoplasmic. A helical membrane pass occupies residues 58–78 (TPMYFFLSVLSISETYYTVAI). Residues 79-98 (NPQMLSGLLSPQQTISIPGC) lie on the Extracellular side of the membrane. Cysteines 98 and 180 form a disulfide. The helical transmembrane segment at 99–119 (AAQLFFYLTFGVNKCFLLTAM) threads the bilayer. Topologically, residues 120 to 149 (GYDHYVAICNPLQYSVIMGKKACIQLVSGS) are cytoplasmic. A helical transmembrane segment spans residues 150-170 (WNIGLSTAIIQVSSVFSLPFC). Residues 171–202 (DANLISHFFCDIRPIMKLACADTTIKEFITLL) are Extracellular-facing. A helical membrane pass occupies residues 203–223 (ISLCVLVLPMVLIFISYVLIV). The Cytoplasmic portion of the chain corresponds to 224 to 237 (TTILKIASAEGRRK). The chain crosses the membrane as a helical span at residues 238–254 (AFATCASHLTVVIVHYG). At 255–272 (RTSFIYLKPKSQNSLQDR) the chain is on the extracellular side. The chain crosses the membrane as a helical span at residues 273 to 292 (LISVTYTVITPLLNPVVYSL). Over 293 to 311 (RNKEVKDALLRALGRKPLS) the chain is Cytoplasmic.

Belongs to the G-protein coupled receptor 1 family.

The protein localises to the cell membrane. Odorant receptor. This Homo sapiens (Human) protein is Olfactory receptor 10J4 (OR10J4).